Consider the following 84-residue polypeptide: Dolichol phosphate-mannose biosynthesis regulatory protein (84 aa).

2 helical membrane passes run 11–31 (FGLV…VILL) and 49–69 (YAVL…GLFI).

Belongs to the DPM2 family. In terms of assembly, component of the dolichol-phosphate mannose (DPM) synthase complex composed of DPM1, DPM2 and DPM3; in the complex interacts directly with DPM3. Component of the glycosylphosphatidylinositol-N-acetylglucosaminyltransferase (GPI-GnT) complex composed at least by PIGA, PIGC, PIGH, PIGP, PIGQ, PIGY and DPM2. Interacts with PIGA, PIGC and PIGQ.

The protein resides in the endoplasmic reticulum membrane. It functions in the pathway protein modification; protein glycosylation. Regulates the biosynthesis of dolichol phosphate-mannose. Regulatory subunit of the dolichol-phosphate mannose (DPM) synthase complex; essential for the ER localization and stable expression of DPM1. Part of the glycosylphosphatidylinositol-N-acetylglucosaminyltransferase (GPI-GnT) complex that catalyzes the transfer of N-acetylglucosamine from UDP-N-acetylglucosamine to phosphatidylinositol and participates in the first step of GPI biosynthesis. May act by regulating the GPI-GNT complex. The chain is Dolichol phosphate-mannose biosynthesis regulatory protein from Mus musculus (Mouse).